Consider the following 274-residue polypeptide: Karrikin insensitive 2 receptor IA (274 aa).

Ser-95 acts as the Nucleophile in catalysis. Active-site residues include Asp-217 and His-246.

It belongs to the AB hydrolase superfamily. As to quaternary structure, interacts with MAX2A and MAX2B in the presence of (-)-germacrene D, thus forming an E3 SCF ubiquitin ligase complex (ASK-cullin-F-box) containing MAX2A or MAX2B and KAI2IA recognizing SMAX1A; this leads to the subsequent degradation of the transcriptional corepressor SMAX1A, thus triggering the activation of a downstream signaling cascade. Strongly expressed in stigma.

It is found in the nucleus. The protein localises to the cytoplasm. Its activity is regulated as follows. Hydrolysis activity toward yoshimulactone green (YLG), a fluorescent agonist to strigolactone receptor, is inhibited by (-)-germacrene D and GR24, a synthetic strigolactone analog. Its function is as follows. Hydrolase involved in the olfaction of sesquiterpene volatile organic compounds (VOCs) during volatile plant communication in a MAX2 proteins-dependent manner. Acts as a karrikin-insensitive receptor that stereospecifically perceives and binds to (-)-germacrene D, particularly in stigmas, and triggers a signaling cascade influencing plant fitness, as the result of reproductive organ growth-promoting effect; this process involves an interaction with MAX2 proteins (e.g. MAX2A and MAX2B) and the subsequent degradation of SMAX1a, a transcriptional corepressor. This is Karrikin insensitive 2 receptor IA from Petunia hybrida (Petunia).